Reading from the N-terminus, the 321-residue chain is UDP-N-acetylenolpyruvoylglucosamine reductase (321 aa).

The region spanning 36 to 203 (FRAGGLAEVM…TGALFEGYPE (168 aa)) is the FAD-binding PCMH-type domain. Arg-183 is a catalytic residue. Ser-232 serves as the catalytic Proton donor. Glu-302 is a catalytic residue.

This sequence belongs to the MurB family. FAD serves as cofactor.

It is found in the cytoplasm. It catalyses the reaction UDP-N-acetyl-alpha-D-muramate + NADP(+) = UDP-N-acetyl-3-O-(1-carboxyvinyl)-alpha-D-glucosamine + NADPH + H(+). It functions in the pathway cell wall biogenesis; peptidoglycan biosynthesis. Its function is as follows. Cell wall formation. This is UDP-N-acetylenolpyruvoylglucosamine reductase from Agrobacterium fabrum (strain C58 / ATCC 33970) (Agrobacterium tumefaciens (strain C58)).